The following is a 340-amino-acid chain: Toxin coregulated pilus biosynthesis protein E (340 aa).

Helical transmembrane passes span 108–131 (AISS…GYSV), 146–161 (WPGV…FSLY), and 312–333 (NISL…FSLV).

Belongs to the GSP F family.

The protein localises to the cell inner membrane. Functionally, probably involved in cholera toxin receptor (GM1) interaction in order to bring the cells within close proximity of the ganglioside for efficient toxin delivery. This is Toxin coregulated pilus biosynthesis protein E (tcpE) from Vibrio cholerae serotype O1 (strain ATCC 39315 / El Tor Inaba N16961).